Reading from the N-terminus, the 434-residue chain is (3,5-dihydroxyphenyl)acetyl-CoA 1,2-dioxygenase (434 aa).

Substrate contacts are provided by residues Asp184, Glu190, 223–226 (HPRY), 234–239 (AGINLK), Gly293, 322–324 (IPG), and Gln413.

The protein belongs to the enoyl-CoA hydratase/isomerase family. In terms of assembly, homohexamer; dimer of trimers.

It catalyses the reaction (3,5-dihydroxyphenyl)acetyl-CoA + O2 = 2-(3,5-dihydroxyphenyl)-2-oxoacetate + CoA + H(+). Functionally, involved in the biosynthesis of the nonproteinogenic amino acid monomer (S)-3,5-dihydroxyphenylglycine (Dpg) responsible of the production of vancomycin and teicoplanin antibiotics. Catalyzes the unusual conversion 3,5-dihydroxyphenylacetyl-CoA (DPA-CoA) to 3,5-dihydroxyphenylglyoxylate. DpgC performed a net four-electron oxidation of the benzylic carbon of DPA-CoA and the hydrolysis of the thioester bond to generate free CoA. It can also use phenylacetyl-CoA (PA-CoA) as substrate. The protein is (3,5-dihydroxyphenyl)acetyl-CoA 1,2-dioxygenase (dpgC) of Amycolatopsis orientalis (Nocardia orientalis).